A 591-amino-acid polypeptide reads, in one-letter code: Metalloendopeptidase OPG085 (591 aa).

Zn(2+) is bound at residue His-41. Glu-44 is an active-site residue. Positions 45 and 112 each coordinate Zn(2+).

It belongs to the peptidase M44 family. The cofactor is Zn(2+). In terms of processing, undergoes proteolytic processing during the course of infection. May be cleaved into 46 kDa and 22 kDa products (Potential).

Its subcellular location is the virion. Its function is as follows. Probably involved in maturation of some viral proteins by processing them preferentially at Ala-Gly-|-Ser/Thr/Lys motifs. Does not seem to be responsible for the cleavage of major core proteins. This is Metalloendopeptidase OPG085 (OPG085) from Homo sapiens (Human).